Consider the following 274-residue polypeptide: Putative ABC transporter ATP-binding protein MM_1037 (274 aa).

An ABC transporter domain is found at 2-235; that stretch reads IRLENVSYCY…PSLKDLGLTP (234 aa). 35 to 42 is a binding site for ATP; the sequence is GRNGSGKS.

Belongs to the ABC transporter superfamily.

The protein localises to the cell membrane. Its function is as follows. Probably part of an ABC transporter complex. Responsible for energy coupling to the transport system. This chain is Putative ABC transporter ATP-binding protein MM_1037, found in Methanosarcina mazei (strain ATCC BAA-159 / DSM 3647 / Goe1 / Go1 / JCM 11833 / OCM 88) (Methanosarcina frisia).